The primary structure comprises 165 residues: MNSLENLILVGVIKSCHGIKGHVMLKSFTDPATKILERNLVNESGANIHIKLISQNAKGELICTFNDIATRNEAEHLKGYKIFCLRASLPELEEDEFYIADLTHLPVLNQDHKEIGKIKNILNFGAGDIIEIEFSDQTTELLPFNKEFFPIITKDYVILNYQREA.

A PRC barrel domain is found at 94–165 (EDEFYIADLT…YVILNYQREA (72 aa)).

This sequence belongs to the RimM family. Binds ribosomal protein uS19.

It localises to the cytoplasm. In terms of biological role, an accessory protein needed during the final step in the assembly of 30S ribosomal subunit, possibly for assembly of the head region. Essential for efficient processing of 16S rRNA. May be needed both before and after RbfA during the maturation of 16S rRNA. It has affinity for free ribosomal 30S subunits but not for 70S ribosomes. This is Ribosome maturation factor RimM from Rickettsia rickettsii (strain Sheila Smith).